The primary structure comprises 290 residues: MLRNKIDKIRLLFRKDRESYSCFYRILGFYPRNIRLYEQALLHKSTAVRSEKGRPLNNERLEFLGDAILDAIVGDIVYQHFEGKREGFLTNTRSKIVQRETLNKLAVEIGLDKLIKYSTRSSSHNSYMYGNAFEAFIGAIYLDRGYECCKQFMERRIIEPYIDLDKLSRKEVNFKSKLIEWSQKNKMEVSFELIEQSLDKENNPVFQTEVRIEGILGGSGTGYSKKESQQNAAQMTLKKIKGDPEFMASVQEAKTQNNVPAEDTTPESETSLTAENQQIDEIISTEEISV.

An RNase III domain is found at 20 to 145 (YSCFYRILGF…FIGAIYLDRG (126 aa)). E62 is a Mg(2+) binding site. Residue D66 is part of the active site. 2 residues coordinate Mg(2+): N131 and E134. Residue E134 is part of the active site. The region spanning 173–242 (NFKSKLIEWS…AQMTLKKIKG (70 aa)) is the DRBM domain. The tract at residues 254-290 (KTQNNVPAEDTTPESETSLTAENQQIDEIISTEEISV) is disordered. The span at 267–279 (ESETSLTAENQQI) shows a compositional bias: polar residues.

The protein belongs to the ribonuclease III family. Homodimer. It depends on Mg(2+) as a cofactor.

The protein localises to the cytoplasm. The catalysed reaction is Endonucleolytic cleavage to 5'-phosphomonoester.. Its function is as follows. Digests double-stranded RNA. Involved in the processing of primary rRNA transcript to yield the immediate precursors to the large and small rRNAs (23S and 16S). Processes some mRNAs, and tRNAs when they are encoded in the rRNA operon. Processes pre-crRNA and tracrRNA of type II CRISPR loci if present in the organism. The chain is Ribonuclease 3 from Bacteroides fragilis (strain ATCC 25285 / DSM 2151 / CCUG 4856 / JCM 11019 / LMG 10263 / NCTC 9343 / Onslow / VPI 2553 / EN-2).